A 52-amino-acid chain; its full sequence is Venom peptide 4b (52 aa).

The N-terminal stretch at 1–23 (MRSAILLVIVAIVAILGFLGVNA) is a signal peptide. AXPX repeat units lie at residues 23-26 (AEPL), 31-34 (AEPN), and 39-42 (AAPL). A propeptide spanning residues 24–41 (EPLPSPLAEPNPHAKAAP) is cleaved from the precursor. Residues 30–52 (LAEPNPHAKAAPLSPAAMASLAG) form a disordered region. Residues 37–52 (AKAAPLSPAAMASLAG) show a composition bias toward low complexity. Alanine 51 carries the post-translational modification Alanine amide.

In terms of tissue distribution, expressed by the venom gland.

It is found in the secreted. This Eumenes pomiformis (Potter wasp) protein is Venom peptide 4b.